Consider the following 123-residue polypeptide: MMTKEQIIEAVKNMTVLELNELVKAIEEEFGVTAAAPVVVAGGAAAGGEAAAEKTEFDVILADAGAQKIKVIKVVREITGLGLKEAKDLVDNTPKPLKEAVSKEEAEEIKAKLEEVGAKVEVK.

The protein belongs to the bacterial ribosomal protein bL12 family. In terms of assembly, homodimer. Part of the ribosomal stalk of the 50S ribosomal subunit. Forms a multimeric L10(L12)X complex, where L10 forms an elongated spine to which 2 to 4 L12 dimers bind in a sequential fashion. Binds GTP-bound translation factors.

In terms of biological role, forms part of the ribosomal stalk which helps the ribosome interact with GTP-bound translation factors. Is thus essential for accurate translation. The polypeptide is Large ribosomal subunit protein bL12 (Geobacillus thermodenitrificans (strain NG80-2)).